We begin with the raw amino-acid sequence, 306 residues long: Glutaminase (306 aa).

Residues Ser61, Asn111, Glu157, Asn164, Tyr188, Tyr240, and Val258 each contribute to the substrate site.

The protein belongs to the glutaminase family. As to quaternary structure, homotetramer.

It carries out the reaction L-glutamine + H2O = L-glutamate + NH4(+). This Pseudoalteromonas atlantica (strain T6c / ATCC BAA-1087) protein is Glutaminase.